The primary structure comprises 234 residues: Large ribosomal subunit protein uL1c (234 aa).

The protein belongs to the universal ribosomal protein uL1 family. Part of the 50S ribosomal subunit.

The protein resides in the plastid. It is found in the chloroplast. In terms of biological role, binds directly to 23S rRNA. Might be involved in E site tRNA release (Potential). The sequence is that of Large ribosomal subunit protein uL1c (rpl1) from Guillardia theta (Cryptophyte).